The chain runs to 141 residues: Large ribosomal subunit protein uL11 (141 aa).

Belongs to the universal ribosomal protein uL11 family. In terms of assembly, part of the ribosomal stalk of the 50S ribosomal subunit. Interacts with L10 and the large rRNA to form the base of the stalk. L10 forms an elongated spine to which L12 dimers bind in a sequential fashion forming a multimeric L10(L12)X complex. In terms of processing, one or more lysine residues are methylated.

In terms of biological role, forms part of the ribosomal stalk which helps the ribosome interact with GTP-bound translation factors. The polypeptide is Large ribosomal subunit protein uL11 (Chlorobium luteolum (strain DSM 273 / BCRC 81028 / 2530) (Pelodictyon luteolum)).